The following is a 636-amino-acid chain: Chaperone protein DnaK (636 aa).

The residue at position 198 (T198) is a Phosphothreonine; by autocatalysis. Residues 602–613 show a composition bias toward low complexity; that stretch reads QPAGEEQAGAAA. The tract at residues 602–636 is disordered; that stretch reads QPAGEEQAGAAAHEGEAKGEKVVDADFEEVKEDKK. The span at 614 to 625 shows a compositional bias: basic and acidic residues; it reads HEGEAKGEKVVD. The segment covering 626-636 has biased composition (acidic residues); it reads ADFEEVKEDKK.

The protein belongs to the heat shock protein 70 family.

Its function is as follows. Acts as a chaperone. The polypeptide is Chaperone protein DnaK (Geotalea daltonii (strain DSM 22248 / JCM 15807 / FRC-32) (Geobacter daltonii)).